A 320-amino-acid polypeptide reads, in one-letter code: Olfactory receptor 52W1 (320 aa).

Topologically, residues 1–30 are extracellular; the sequence is MAETLQLNSTFLHPNFFILTGFPGLGSAQT. Asn-8 carries an N-linked (GlcNAc...) asparagine glycan. A helical transmembrane segment spans residues 31-51; sequence WLTLVFGPIYLLALLGNGALP. Over 52–59 the chain is Cytoplasmic; sequence AVVWIDST. Residues 60–80 traverse the membrane as a helical segment; it reads LHQPMFLLLAILAATDLGLAT. At 81–104 the chain is on the extracellular side; sequence SIAPGLLAVLWLGPRSVPYAVCLV. A helical transmembrane segment spans residues 105–125; the sequence is QMFFVHALTAMESGVLLAMAC. At 126 to 144 the chain is on the cytoplasmic side; it reads DRAAAIGRPLHYPVLVTKA. Residues 145 to 165 traverse the membrane as a helical segment; sequence CVGYAALALALKAVAIVVPFP. The Extracellular segment spans residues 166–201; it reads LLVAKFEHFQAKTIGHTYCAHMAVVELVVGNTQATN. Residues 202–222 traverse the membrane as a helical segment; that stretch reads LYGLALSLAISGMDILGITGS. Residues 223-242 are Cytoplasmic-facing; sequence YGLIAHAVLQLPTREAHAKA. The helical transmembrane segment at 243-263 threads the bilayer; the sequence is FGTCSSHICVILAFYIPGLFS. Residues 264–279 lie on the Extracellular side of the membrane; sequence YLTHRFGHHTVPKPVH. A helical transmembrane segment spans residues 280–300; sequence ILLSNIYLLLPPALNPLIYGA. The Cytoplasmic portion of the chain corresponds to 301–320; the sequence is RTKQIRDRLLETFTFRKSPL.

This sequence belongs to the G-protein coupled receptor 1 family.

Its subcellular location is the cell membrane. Its function is as follows. Odorant receptor. The chain is Olfactory receptor 52W1 (OR52W1) from Homo sapiens (Human).